The sequence spans 166 residues: Transcription antitermination protein NusB (166 aa).

Basic and acidic residues predominate over residues 1–18 (MISDESDRFNPRDPKPAD). A disordered region spans residues 1–28 (MISDESDRFNPRDPKPADAGKPSKSAKR).

Belongs to the NusB family.

Involved in transcription antitermination. Required for transcription of ribosomal RNA (rRNA) genes. Binds specifically to the boxA antiterminator sequence of the ribosomal RNA (rrn) operons. The polypeptide is Transcription antitermination protein NusB (Pseudomonas putida (strain GB-1)).